Consider the following 440-residue polypeptide: Glycerophosphocholine cholinephosphodiesterase ENPP6 (440 aa).

The signal sequence occupies residues 1-22 (MAVKLGTLLLALALGLAQPASA). 3 residues coordinate substrate: Asp32, Ser71, and Asn92. The Zn(2+) site is built by Asp32 and Ser71. Ser71 (nucleophile) is an active-site residue. Ser71 carries the post-translational modification Phosphoserine. N-linked (GlcNAc...) asparagine glycosylation is found at Asn100 and Asn118. Cysteines 142 and 154 form a disulfide. Asp193 is a binding site for substrate. Asp193, His197, Asp240, and His241 together coordinate Zn(2+). His241 is a substrate binding site. Asn341 is a glycosylation site (N-linked (GlcNAc...) asparagine). His354 serves as a coordination point for substrate. His354 contributes to the Zn(2+) binding site. Asn404 carries an N-linked (GlcNAc...) asparagine glycan. Ser419 carries the GPI-anchor amidated serine lipid modification. A propeptide spans 420–440 (TAPPVWPSHCALALILLFLLA) (removed in mature form).

The protein belongs to the nucleotide pyrophosphatase/phosphodiesterase family. As to quaternary structure, homodimer; disulfide-linked. Homotetramer. It depends on Zn(2+) as a cofactor. Predominantly expressed in kidney and brain. In the kidney, expressed specifically in the proximal tubules and thin descending limbs of Henle (at protein level).

The protein resides in the cell membrane. It carries out the reaction sn-glycerol 3-phosphocholine + H2O = phosphocholine + glycerol + H(+). It catalyses the reaction a 1-acyl-sn-glycero-3-phosphocholine + H2O = a 1-acyl-sn-glycerol + phosphocholine + H(+). The catalysed reaction is a 1-O-alkyl-sn-glycero-3-phosphocholine + H2O = a 1-O-alkyl-sn-glycerol + phosphocholine + H(+). The enzyme catalyses 1-dodecanoyl-sn-glycero-3-phosphocholine + H2O = 1-dodecanoyl-sn-glycerol + phosphocholine + H(+). It carries out the reaction 1-hexadecanoyl-sn-glycero-3-phosphocholine + H2O = 1-hexadecanoyl-sn-glycerol + phosphocholine + H(+). It catalyses the reaction 1-(5Z,8Z,11Z,14Z-eicosatetraenoyl)-sn-glycero-3-phosphocholine + H2O = 1-(5Z,8Z,11Z,14Z-eicosatetraenoyl)-sn-glycerol + phosphocholine + H(+). The catalysed reaction is 1-tetradecanoyl-sn-glycero-3-phosphocholine + H2O = 1-tetradecanoyl-sn-glycerol + phosphocholine + H(+). The enzyme catalyses sphing-4-enine-phosphocholine + H2O = sphing-4-enine + phosphocholine + H(+). It carries out the reaction 1-(9Z-octadecenoyl)-sn-glycero-3-phosphocholine + H2O = 1-(9Z-octadecenoyl)-sn-glycerol + phosphocholine + H(+). It catalyses the reaction 1-(9Z,12Z)-octadecadienoyl-sn-glycero-3-phosphocholine + H2O = 1-(9Z,12Z-octadecadienoyl)-sn-glycerol + phosphocholine + H(+). The catalysed reaction is glycero-2-phosphocholine + H2O = phosphocholine + glycerol + H(+). Its activity is regulated as follows. Inhibited by EDTA and EGTA in vitro. Its function is as follows. Choline-specific glycerophosphodiesterase that hydrolyzes glycerophosphocholine (GPC) and lysophosphatidylcholine (LPC) and contributes to supplying choline to the cells. Has a preference for LPC with short (12:0 and 14:0) or polyunsaturated (18:2 and 20:4) fatty acids. In vitro, hydrolyzes only choline-containing lysophospholipids, such as sphingosylphosphorylcholine (SPC), platelet-activating factor (PAF) and lysoPAF, but not other lysophospholipids. The protein is Glycerophosphocholine cholinephosphodiesterase ENPP6 of Homo sapiens (Human).